Reading from the N-terminus, the 706-residue chain is MSPTDPLDDEDTFKILVATDIHLGFMEKDAVRGNDTFVTFDEILRLALENEVDFILLGGDLFHENKPSRKTLHSCLELLRKYCMGDRPVQFEVISDQSVNFGFSKFPWVNYQDGNLNISIPVFSIHGNHDDPTGADALCALDVLSCAGFVNHFGRSMSVEKVDISPVLLQKGSTKLALYGLGSIPDERLYRMFVNKKVTMLRPKEDENSWFNLFVIHQNRSKHGNTNFIPEQFLDDFIDLVIWGHEHECKIGPIKNEQQLFYVSQPGSSVVTSLSPGEAVKKHVGLLRIKGRKMNMQKLPLRTVRRFFIEDVVLANHPNLFNPDNPKVTQAIQSFCLEKIEEMLDSAERERLGNPQQPGKPLIRLRVDYSGGFEPFNVLRFSQKFVDRVANPKDVIHFFRHREQKGKTGEEINFGMLITKPASEGATLRVEDLVKQYFQTAEKNVQLSLLTERGMGEAVQEFVDKEEKDAIEELVKYQLEKTQRFLKERHIDALEDKIDEEVRRFRESRQRNTNEEDDEVREAMSRARALRSQSETSTSAFSAEDLSFDTSEQTANDSDDSLSAVPSRGRGRGRGRRGARGQSSAPRGGSQRGRDTGLEITTRGRSSKATSSTSRNMSIIDAFRSTRQQPSRNVAPKNYSETIEVDDSDEDDIFPTNSRADQRWSGTTSSKRMSQSQTAKGVDFESDEDDDDDPFMSSSCPRRNRR.

Ser-2 carries the post-translational modification N-acetylserine. Ser-2 is subject to Phosphoserine. 3 residues coordinate Mn(2+): Asp-20, His-22, and Asp-60. The interval 87-117 is interaction with NBN; the sequence is RPVQFEVISDQSVNFGFSKFPWVNYQDGNLN. Asn-128 serves as a coordination point for Mn(2+). His-129 functions as the Proton donor in the catalytic mechanism. Positions 217, 245, and 247 each coordinate Mn(2+). A Glycyl lysine isopeptide (Lys-Gly) (interchain with G-Cter in SUMO2) cross-link involves residue Lys-255. The residue at position 275 (Ser-275) is a Phosphoserine. Residue Lys-282 forms a Glycyl lysine isopeptide (Lys-Gly) (interchain with G-Cter in UFM1) linkage. A Glycyl lysine isopeptide (Lys-Gly) (interchain with G-Cter in ubiquitin) cross-link involves residue Lys-339. Residues Lys-384 and Lys-468 each participate in a glycyl lysine isopeptide (Lys-Gly) (interchain with G-Cter in SUMO) cross-link. Lys-481 participates in a covalent cross-link: Glycyl lysine isopeptide (Lys-Gly) (interchain with G-Cter in ubiquitin). Positions 505 to 514 are enriched in basic and acidic residues; sequence FRESRQRNTN. Residues 505–706 are disordered; the sequence is FRESRQRNTN…SSSCPRRNRR (202 aa). Residues 531–541 show a composition bias toward polar residues; that stretch reads RSQSETSTSAF. The span at 569-579 shows a compositional bias: basic residues; that stretch reads GRGRGRGRRGA. Arg-570, Arg-572, Arg-574, Arg-576, Arg-577, Arg-580, Arg-587, Arg-592, and Arg-594 each carry asymmetric dimethylarginine. Positions 570–594 match the GAR motif; the sequence is RGRGRGRRGARGQSSAPRGGSQRGR. Residues 580–589 are compositionally biased toward low complexity; the sequence is RGQSSAPRGG. Residues 603-617 are compositionally biased toward polar residues; sequence RGRSSKATSSTSRNM. Phosphoserine is present on residues Ser-618, Ser-640, and Ser-648. A compositionally biased stretch (acidic residues) spans 643–653; the sequence is IEVDDSDEDDI. Positions 655 to 679 are enriched in polar residues; that stretch reads PTNSRADQRWSGTTSSKRMSQSQTA. Position 671 is an N6-lactoyllysine (Lys-671). Phosphoserine occurs at positions 674, 676, 686, and 699. The segment covering 684–694 has biased composition (acidic residues); that stretch reads FESDEDDDDDP.

The protein belongs to the MRE11/RAD32 family. As to quaternary structure, component of the MRN complex composed of two heterodimers RAD50 and MRE11 associated with a single NBN. The MRN complexes dimerize on DNA to form joined MRN-MRN oligomers required for DNA double-strand break repair. As part of the MRN complex, interacts with MCM9; the interaction recruits the complex to DNA repair sites. Component of the BASC complex, at least composed of BRCA1, MSH2, MSH6, MLH1, ATM, BLM, RAD50, MRE11 and NBN. Found in a complex with TERF2. Interacts with DCLRE1C/Artemis and DCLRE1B/Apollo. Interacts with ATF2. Interacts with EXD2. Interacts with MRNIP. Interacts with SAMHD1; leading to stimulate 3'-5' exonuclease activity. Interacts (when ubiquitinated) with UBQLN4 (via its UBA domain). Interacts with CYREN (via XLF motif). Interacts with GFI1; promoting methylation by PRMT1. Interacts with DYNLL1; inhibiting the activity of MRE11. Interacts with C1QBP and RAD50; interaction takes place in absence of DNA damage to form the MRC (MRE11-RAD50-C1QBP) complex that inhibits the activity of MRE11. Interacts with AGER/RAGE; AGER is recruited to DNA double-strand break sites where it enhances MRE11 endonuclease activity to promote DNA repair. It depends on Mn(2+) as a cofactor. Post-translationally, phosphorylated by ATM at Ser-674 and Ser-676 in response to DNA damage, promoting MRE11 activity: phosphorylation activates MRE11 by preventing the interaction between MRE11 and the C1QBP inhibitor. Phosphorylation at Ser-648 by PLK1 primes for phosphorylation at Ser-686 by CK2, inhibiting recruitment of the MRN complex to DNA damage sites. Asymmetric dimethylation by PRMT1 promotes MRE11 exonuclease activity. In terms of processing, lactylation at Lys-671 by CREBBP/CBP in response to DNA damage promotes DNA binding and MRE11 activity. Post-translationally, acetylated on lysine residues by KAT2A /GCN5. Ubiquitinated following DNA damage. Ubiquitination triggers interaction with UBQLN4, leading to MRE11 removal from chromatin and degradation by the proteasome. Ubiquitinated at Lys-339 and Lys-481 by RNF126 via 'Lys-27'- and 'Lys-29'-linked polyubiquitin chains, promoting the exonuclease activity of MRE11. In terms of processing, SUMOylated by PIAS1, stabilizing MRE11 on chromatin during end resection. DeSUMOylated by SENP3 following removal from DNA double-strand breaks (DSBs). Post-translationally, ufmylation at Lys-282 promotes MRE11 activity and is required for activation of the ATM and ATR kinases by the MRN complex.

It is found in the nucleus. Its subcellular location is the chromosome. It localises to the telomere. With respect to regulation, interaction with SAMHD1 stimulates the double-strand-specific 3'-5' exonuclease activity. RBBP8/CtIP specifically promotes the endonuclease activity to clear protein-DNA adducts and generate clean double-strand break ends. DYNLL1-binding inhibits the activity of MRE11. MRE11 activity is inhibited by C1QBP: in absence of DNA damage, C1QBP interacts with unphosphorylated MRE11, preventing formation and activity of the MRN complex. Core component of the MRN complex, which plays a central role in double-strand break (DSB) repair, DNA recombination, maintenance of telomere integrity and meiosis. The MRN complex is involved in the repair of DNA double-strand breaks (DSBs) via homologous recombination (HR), an error-free mechanism which primarily occurs during S and G2 phases. The complex (1) mediates the end resection of damaged DNA, which generates proper single-stranded DNA, a key initial steps in HR, and is (2) required for the recruitment of other repair factors and efficient activation of ATM and ATR upon DNA damage. Within the MRN complex, MRE11 possesses both single-strand endonuclease activity and double-strand-specific 3'-5' exonuclease activity. After DSBs, MRE11 is loaded onto DSBs sites and cleaves DNA by cooperating with RBBP8/CtIP to initiate end resection. MRE11 first endonucleolytically cleaves the 5' strand at DNA DSB ends to prevent non-homologous end joining (NHEJ) and licence HR. It then generates a single-stranded DNA gap via 3' to 5' exonucleolytic degradation to create entry sites for EXO1- and DNA2-mediated 5' to 3' long-range resection, which is required for single-strand invasion and recombination. RBBP8/CtIP specifically promotes the endonuclease activity of MRE11 to clear protein-DNA adducts and generate clean double-strand break ends. MRE11 endonuclease activity is also enhanced by AGER/RAGE. The MRN complex is also required for DNA damage signaling via activation of the ATM and ATR kinases: the nuclease activity of MRE11 is not required to activate ATM and ATR. The MRN complex is also required for the processing of R-loops. The MRN complex is involved in the activation of the cGAS-STING pathway induced by DNA damage during tumorigenesis: the MRN complex acts by displacing CGAS from nucleosome sequestration, thereby activating it. In telomeres the MRN complex may modulate t-loop formation. The polypeptide is Double-strand break repair protein MRE11 (Mus musculus (Mouse)).